We begin with the raw amino-acid sequence, 138 residues long: Basic phospholipase A2 BP-II (138 aa).

The signal sequence occupies residues 1 to 16 (MRTLWIMAVLLVGVDG). Disulfide bonds link C42–C132, C44–C60, C59–C112, C65–C138, C66–C105, C73–C98, and C91–C103. Positions 45 and 47 each coordinate Ca(2+). The active site involves H63. Residue D106 is part of the active site.

Belongs to the phospholipase A2 family. Group II subfamily. K49 sub-subfamily. As to quaternary structure, exists as a monomer in both solution and crystal states. In the presence of SDS or probably in the presence of phospholipids, assembles to form SDS-resistant stable oligomers. It depends on Ca(2+) as a cofactor. As to expression, expressed by the venom gland.

It localises to the secreted. It catalyses the reaction a 1,2-diacyl-sn-glycero-3-phosphocholine + H2O = a 1-acyl-sn-glycero-3-phosphocholine + a fatty acid + H(+). In terms of biological role, snake venom phospholipase A2 (PLA2) that shows anticoagulant activities, strong myolytic activity, infiltration of polymorphonuclear cells, and edema in stromal tissues. Induces cell death of Jurkat cells in a concentration-dependent manner. Shows a low phospholipase A2 activity. PLA2 catalyzes the calcium-dependent hydrolysis of the 2-acyl groups in 3-sn-phosphoglycerides. This chain is Basic phospholipase A2 BP-II, found in Protobothrops flavoviridis (Habu).